The sequence spans 1331 residues: Receptor-type adenylate cyclase B (1331 aa).

The Cytoplasmic portion of the chain corresponds to 1–33 (MYADATHPRRACWCGAGGVSGCVRQRHAYRCSR). A helical membrane pass occupies residues 34 to 54 (LLAGVLLIVGALTLTLAVSTV). The Extracellular segment spans residues 55–898 (PAAWAAGAVA…SHALTPAQRG (844 aa)). 5 N-linked (GlcNAc...) asparagine glycosylation sites follow: Asn-255, Asn-429, Asn-558, Asn-574, and Asn-657. Residues 899-919 (GAIAGIALLTVILLAVAGLAL) traverse the membrane as a helical segment. At 920 to 1331 (YCCMDNRNND…PTVCNVRGAH (412 aa)) the chain is on the cytoplasmic side. One can recognise a Guanylate cyclase domain in the interval 940–1094 (TLLFTDIESS…DTSNMAARTE (155 aa)). The Mg(2+) site is built by Asp-945 and Asp-988.

It belongs to the adenylyl cyclase class-3 family. It depends on Mg(2+) as a cofactor.

The protein localises to the membrane. The catalysed reaction is ATP = 3',5'-cyclic AMP + diphosphate. Its function is as follows. Could act as a receptor for an unknown ligand. The chain is Receptor-type adenylate cyclase B (RAC-B) from Leishmania donovani.